The sequence spans 66 residues: Large ribosomal subunit protein bL33c (66 aa).

This sequence belongs to the bacterial ribosomal protein bL33 family.

The protein resides in the plastid. The protein localises to the chloroplast. This chain is Large ribosomal subunit protein bL33c, found in Agrostis stolonifera (Creeping bentgrass).